The chain runs to 617 residues: Pentatricopeptide repeat-containing protein At4g18520, chloroplastic (617 aa).

The N-terminal 19 residues, 1–19 (MFSLSLIQPRLRISEIPVT), are a transit peptide targeting the chloroplast. 14 PPR repeats span residues 116–146 (VIYF…MPEK), 147–181 (NTVT…GIRF), 183–217 (NERM…GVGN), 222–247 (SSLV…MEEK), 248–282 (DVIS…WFLP), 283–317 (NEFT…MIKT), 318–348 (DVFV…MSNR), 349–383 (NTVT…HLIA), 384–418 (NNLT…SIEK), 419–449 (NVYI…LPSR), 450–484 (DVVS…GVEP), 485–519 (NPFT…HALS), 520–550 (NVFV…MPEK), and 551–585 (NLVS…GFEV).

The protein belongs to the PPR family. PCMP-A subfamily. As to quaternary structure, interacts with MORF8/RIP1, MORF2/RIP2 and MORF9/RIP9. In terms of tissue distribution, expressed specifically in aerial greening tissues, such as cotyledons, rosette leaves, cauline leaves, stems, sepals, stamens, carpels and siliques.

The protein resides in the plastid. The protein localises to the chloroplast. In terms of biological role, required for proper chloroplast development. Involved in the regulation of plastid gene expression probably through regulation of plastid-encoded polymerase (PEP) dependent chloroplast transcription. Required for RNA editing of several chloroplastic transcripts, especially accD transcripts. Required for processing of the chloroplastic rpoA pre-mRNA. Required for the monocistronic rpoA transcript processing from the rpl23-rpl2-rps19-rpl22-rps3-rpl16-rpl14-rps8-rpl36-rps11-rpoA polycistron. Binds the intergenic sequence of rps11-rpoA for rpoA monocistronic RNA cleavage. The chain is Pentatricopeptide repeat-containing protein At4g18520, chloroplastic (PCMP-A2) from Arabidopsis thaliana (Mouse-ear cress).